A 739-amino-acid chain; its full sequence is MASILLRSCRGRAPARLPPPPRYTVPRGSPGDPAHLSCASTLGLRNCLNVPFGCCTPIHPVYTSSRGDHLGCWALRPECLRIVSRAPWTSTSVGFVAVGPQCLPVRGWHSSRPVRDDSVVEKSLKSLKDKNKKLEEGGPVYSPPAEVVVKKSLGQRVLDELKHYYHGFRLLWIDTKIAARMLWRILNGHSLTRRERRQFLRICADLFRLVPFLVFVVVPFMEFLLPVAVKLFPNMLPSTFETQSLKEERLKKELRVKLELAKFLQDTIEEMALKNKAAKGSATKDFSVFFQKIRETGERPSNEEIMRFSKLFEDELTLDNLTRPQLVALCKLLELQSIGTNNFLRFQLTMRLRSIKADDKLIAEEGVDSLNVKELQAACRARGMRALGVTEDRLRGQLKQWLDLHLHQEIPTSLLILSRAMYLPDTLSPADQLKSTLQTLPEIVAKEAQVKVAEVEGEQVDNKAKLEATLQEEAAIQQEHREKELQKRSEVAKDFEPERVVAAPQRPGTEPQPEMPDTVLQSETLKDTAPVLEGLKEEEITKEEIDILSDACSKLQEQKKSLTKEKEELELLKEDVQDYSEDLQEIKKELSKTGEEKYVEESKASKRLTKRVQQMIGQIDGLISQLEMDQQAGKLAPANGMPTGENVISVAELINAMKQVKHIPESKLTSLAAALDENKDGKVNIDDLVKVIELVDKEDVHISTSQVAEIVATLEKEEKVEEKEKAKEKAEKEVAEVKS.

The N-terminal 115 residues, 1–115 (MASILLRSCR…RGWHSSRPVR (115 aa)), are a transit peptide targeting the mitochondrion. Positions 115–136 (RDDSVVEKSLKSLKDKNKKLEE) form a coiled coil. Topologically, residues 116–208 (DDSVVEKSLK…FLRICADLFR (93 aa)) are mitochondrial intermembrane. T192 is subject to Phosphothreonine; by PINK1. The helical transmembrane segment at 209–229 (LVPFLVFVVVPFMEFLLPVAV) threads the bilayer. Residues 230–739 (KLFPNMLPST…AEKEVAEVKS (510 aa)) lie on the Mitochondrial matrix side of the membrane. A Letm1 RBD domain is found at 252-537 (KELRVKLELA…TAPVLEGLKE (286 aa)). 2 coiled-coil regions span residues 462-490 (NKAK…KRSE) and 537-627 (EEEI…SQLE). The residue at position 597 (K597) is an N6-acetyllysine. Residues 663 to 698 (IPESKLTSLAAALDENKDGKVNIDDLVKVIELVDKE) form the EF-hand domain. Ca(2+) contacts are provided by D676, N678, D680, K682, and D687. Residues 708 to 739 (AEIVATLEKEEKVEEKEKAKEKAEKEVAEVKS) adopt a coiled-coil conformation. Residues 718-739 (EKVEEKEKAKEKAEKEVAEVKS) form a disordered region.

Belongs to the LETM1 family. In terms of assembly, homohexamer. Can form 2 complexes: a major (300 kDa) and a minor complex (500-600 kDa). Interacts with BCS1L. Interacts with GHITM. Post-translationally, PINK1-mediated phosphorylation at Thr-192, positively regulates its mitochondrial calcium transport activity.

It localises to the mitochondrion inner membrane. The enzyme catalyses Ca(2+)(in) + 2 H(+)(out) = Ca(2+)(out) + 2 H(+)(in). The catalysed reaction is K(+)(in) + H(+)(out) = K(+)(out) + H(+)(in). Inhibited by ruthenium red or its derivative Ru360. Plays an important role in maintenance of mitochondrial morphology and in mediating either calcium or potassium/proton antiport. Mediates proton-dependent calcium efflux from mitochondrion. Also functions as an electroneutral mitochondrial proton/potassium exchanger. Crucial for the maintenance of mitochondrial tubular networks and for the assembly of the supercomplexes of the respiratory chain. Required for the maintenance of the tubular shape and cristae organization. The sequence is that of Mitochondrial proton/calcium exchanger protein from Homo sapiens (Human).